A 388-amino-acid polypeptide reads, in one-letter code: 1-deoxy-D-xylulose 5-phosphate reductoisomerase (388 aa).

NADPH-binding residues include T10, G11, T12, I13, R37, Q38, and N122. K123 serves as a coordination point for 1-deoxy-D-xylulose 5-phosphate. Residue E124 participates in NADPH binding. Position 148 (D148) interacts with Mn(2+). The 1-deoxy-D-xylulose 5-phosphate site is built by S149, E150, S179, and H202. E150 provides a ligand contact to Mn(2+). Position 208 (G208) interacts with NADPH. The 1-deoxy-D-xylulose 5-phosphate site is built by S215, N220, K221, and E224. E224 lines the Mn(2+) pocket.

It belongs to the DXR family. Mg(2+) is required as a cofactor. Requires Mn(2+) as cofactor.

The enzyme catalyses 2-C-methyl-D-erythritol 4-phosphate + NADP(+) = 1-deoxy-D-xylulose 5-phosphate + NADPH + H(+). It functions in the pathway isoprenoid biosynthesis; isopentenyl diphosphate biosynthesis via DXP pathway; isopentenyl diphosphate from 1-deoxy-D-xylulose 5-phosphate: step 1/6. Its function is as follows. Catalyzes the NADPH-dependent rearrangement and reduction of 1-deoxy-D-xylulose-5-phosphate (DXP) to 2-C-methyl-D-erythritol 4-phosphate (MEP). The protein is 1-deoxy-D-xylulose 5-phosphate reductoisomerase of Laribacter hongkongensis (strain HLHK9).